We begin with the raw amino-acid sequence, 377 residues long: Peroxisomal membrane protein PEX14 (377 aa).

Low complexity predominate over residues 1–15 (MASSEQAEQPSQPSS). The tract at residues 1-24 (MASSEQAEQPSQPSSTPGSENVLP) is disordered. Residue Ala2 is modified to N-acetylalanine. Residues 2–108 (ASSEQAEQPS…YSPAGSRWRD (107 aa)) are Peroxisomal matrix-facing. An N6-acetyllysine modification is found at Lys34. A helical transmembrane segment spans residues 109–126 (YGALAIIMAGIAFGFHQL). Topologically, residues 127-377 (YKKYLLPLIL…EGASNESERD (251 aa)) are cytoplasmic. The segment at 230–377 (PPSPSAPKIP…EGASNESERD (148 aa)) is disordered. Ser232 carries the phosphoserine modification. Low complexity-rich tracts occupy residues 244–259 (PVKS…VNHH) and 265–275 (SPVSNESTSSS). Phosphoserine occurs at positions 282 and 335. A compositionally biased stretch (acidic residues) spans 323-342 (KEDEEDEEDDDVSHVDEEDC). Residues 360 to 377 (QVEKLRRPEGASNESERD) are compositionally biased toward basic and acidic residues.

Belongs to the peroxin-14 family. As to quaternary structure, interacts with PEX13; forming the PEX13-PEX14 docking complex. Interacts with PEX5 (via WxxxF/Y motifs). Interacts with PEX19. Interacts with tubulin.

Its subcellular location is the peroxisome membrane. Its function is as follows. Component of the PEX13-PEX14 docking complex, a translocon channel that specifically mediates the import of peroxisomal cargo proteins bound to PEX5 receptor. The PEX13-PEX14 docking complex forms a large import pore which can be opened to a diameter of about 9 nm. Mechanistically, PEX5 receptor along with cargo proteins associates with the PEX14 subunit of the PEX13-PEX14 docking complex in the cytosol, leading to the insertion of the receptor into the organelle membrane with the concomitant translocation of the cargo into the peroxisome matrix. Plays a key role for peroxisome movement through a direct interaction with tubulin. This Homo sapiens (Human) protein is Peroxisomal membrane protein PEX14.